The following is a 218-amino-acid chain: GTP cyclohydrolase 1 (218 aa).

3 residues coordinate Zn(2+): cysteine 109, histidine 112, and cysteine 180.

This sequence belongs to the GTP cyclohydrolase I family. Toroid-shaped homodecamer, composed of two pentamers of five dimers.

It carries out the reaction GTP + H2O = 7,8-dihydroneopterin 3'-triphosphate + formate + H(+). Its pathway is cofactor biosynthesis; 7,8-dihydroneopterin triphosphate biosynthesis; 7,8-dihydroneopterin triphosphate from GTP: step 1/1. In Pasteurella multocida (strain Pm70), this protein is GTP cyclohydrolase 1 (folE).